A 554-amino-acid chain; its full sequence is Valerianol synthase TPS1G (554 aa).

Asp-307 and Asp-311 together coordinate Mg(2+). The short motif at 326–330 (VQRWD) is the DDXXD motif element. The Mg(2+) site is built by Asp-452, Ser-456, and Glu-460.

This sequence belongs to the terpene synthase family. It depends on Mg(2+) as a cofactor.

It carries out the reaction (2E,6E)-farnesyl diphosphate + H2O = valerianol + diphosphate. Its pathway is secondary metabolite biosynthesis; terpenoid biosynthesis. Its function is as follows. Terpene synthase that catalyzes the biosynthesis of the terpene valerianol, which is a volatile compound of floral scent. In Camellia hiemalis (Camellia), this protein is Valerianol synthase TPS1G.